The following is a 134-amino-acid chain: Large ribosomal subunit protein uL16 (134 aa).

Residues 1 to 20 (MLLQPKRTKFRKMHKGRNRG) show a composition bias toward basic residues. The segment at 1–21 (MLLQPKRTKFRKMHKGRNRGT) is disordered.

This sequence belongs to the universal ribosomal protein uL16 family. Part of the 50S ribosomal subunit.

Its function is as follows. Binds 23S rRNA and is also seen to make contacts with the A and possibly P site tRNAs. This is Large ribosomal subunit protein uL16 from Blochmanniella pennsylvanica (strain BPEN).